A 142-amino-acid chain; its full sequence is Alpha-lactalbumin (142 aa).

An N-terminal signal peptide occupies residues Met-1–Ala-19. In terms of domain architecture, C-type lysozyme spans Glu-20 to Leu-142. Intrachain disulfides connect Cys-25/Cys-139, Cys-47/Cys-130, Cys-80/Cys-96, and Cys-92/Cys-110. Asn-64 and Asn-93 each carry an N-linked (GlcNAc...) asparagine glycan. Lys-98, Asp-101, Asp-103, Asp-106, and Asp-107 together coordinate Ca(2+).

It belongs to the glycosyl hydrolase 22 family. As to quaternary structure, lactose synthase (LS) is a heterodimer of a catalytic component, beta1,4-galactosyltransferase (beta4Gal-T1) and a regulatory component, alpha-lactalbumin (LA). Mammary gland specific. Secreted in milk.

It is found in the secreted. Functionally, regulatory subunit of lactose synthase, changes the substrate specificity of galactosyltransferase in the mammary gland making glucose a good acceptor substrate for this enzyme. This enables LS to synthesize lactose, the major carbohydrate component of milk. In other tissues, galactosyltransferase transfers galactose onto the N-acetylglucosamine of the oligosaccharide chains in glycoproteins. The protein is Alpha-lactalbumin (LALBA) of Ovis aries (Sheep).